Consider the following 666-residue polypeptide: Kinesin-like protein Nod (666 aa).

Residues 8–320 enclose the Kinesin motor domain; that stretch reads AVRIAVREAP…LRFGTSAKKL (313 aa). 87 to 94 contributes to the ATP binding site; sequence GQTGTGKS. The segment at 423–450 is disordered; that stretch reads GFHSDSDKDRHLMPPPTGQEPRQASSQN. Positions 639–666 form a coiled coil; the sequence is ENLFQVKSLPIWSGNKWERFCQINCLDT.

The protein belongs to the TRAFAC class myosin-kinesin ATPase superfamily. Kinesin family. In adult female, found in meiotically active ovaries.

The protein localises to the cytoplasm. It is found in the cytoskeleton. Required for the distributive chromosome segregation of non-exchange chromosomes during meiosis. May be a microtubule motor required to hold distributively 'paired' chromosomes at the metaphase plate until anaphase. This is Kinesin-like protein Nod (nod) from Drosophila melanogaster (Fruit fly).